The chain runs to 346 residues: Glucose-6-phosphatase 3 (346 aa).

Topologically, residues 1-24 (MESTLGAGIAMAEALQNQLPWLEN) are lumenal. Residues 25–45 (VWLWVTFLGDPKSLFLFYFPA) traverse the membrane as a helical segment. At 46–54 (AYYASRRVG) the chain is on the cytoplasmic side. A helical membrane pass occupies residues 55 to 75 (IAVLWISLITEWLNLVFKWFL). The Lumenal portion of the chain corresponds to 76–108 (FGDRPFWWVHESGYYSQAPAQVHQFPSSCETGP). Substrate is bound at residue arginine 79. A helical transmembrane segment spans residues 109–129 (GSPSGHCMITGAALWPIMTAV). Histidine 114 functions as the Proton donor in the catalytic mechanism. Topologically, residues 130-140 (SSQMATRAHSR) are cytoplasmic. A helical membrane pass occupies residues 141-162 (WVRVIPSLAYCTFLLAVGLSRV). Residue arginine 161 coordinates substrate. Residues 163 to 167 (FLLAH) lie on the Lumenal side of the membrane. Histidine 167 acts as the Nucleophile in catalysis. Residues 168–186 (FPHQVLAGLITGAVLGWLM) form a helical membrane-spanning segment. The Cytoplasmic segment spans residues 187-197 (TPQVPMERELS). A helical transmembrane segment spans residues 198 to 218 (FYGLTSLALLLGASLIYWTLF). At 219 to 254 (TLGLDLSWSINLASKWCERPEWVHLDSRPFASLSRD) the chain is on the lumenal side. A helical transmembrane segment spans residues 255–273 (SGAALGLGIALHSPCYAQV). Residues 274 to 283 (RRAHLGYGQK) are Cytoplasmic-facing. Residues 284-304 (LVCLVLAMGLLGPLNWLGYPP) traverse the membrane as a helical segment. Over 305-307 (QIS) the chain is Lumenal. Residues 308 to 328 (LFYIFNFLKYTLWPCLVLALV) form a helical membrane-spanning segment. The Cytoplasmic portion of the chain corresponds to 329–346 (PWLVHMFSAQEAPPIRSS).

This sequence belongs to the glucose-6-phosphatase family.

The protein resides in the endoplasmic reticulum membrane. It catalyses the reaction D-glucose 6-phosphate + H2O = D-glucose + phosphate. Its pathway is carbohydrate biosynthesis; gluconeogenesis. With respect to regulation, inhibited by vanadate. Hydrolyzes glucose-6-phosphate to glucose in the endoplasmic reticulum. May form with the glucose-6-phosphate transporter (SLC37A4/G6PT) a ubiquitously expressed complex responsible for glucose production through glycogenolysis and gluconeogenesis. Probably required for normal neutrophil function. This is Glucose-6-phosphatase 3 (G6PC3) from Bos taurus (Bovine).